Reading from the N-terminus, the 316-residue chain is MGVHPQLNKNGELQHLLTTEGLPAVILRHILDTAESFTGVTERDVKKIPLLRGKSVFNLFFEPSTRTRTTFEIAAKRLSADVINLNMAVSSQTKGETLLDTVDNLSAMHADMFIVRHNQSGAAHLIARHVRPEIHVINAGDGWHAHPTQALLDMFTIRRYKQDFHALRVAIIGDILHSRVARSQIHALTTLGVPEIRVIAPKTLLPAKVERLGVHVYHNMVQGLQDVDVLMMLRLQHERMESAHLPSTEEYFKYYGLTPEKLALARSDAIVMHPGPMNRGVEIDSEVADGTQSVILPQVNFGIAVRMAVMSILAGN.

Positions 66 and 67 each coordinate carbamoyl phosphate. K94 is an L-aspartate binding site. The carbamoyl phosphate site is built by R116, H146, and Q149. Residues R179 and R234 each contribute to the L-aspartate site. Carbamoyl phosphate contacts are provided by G275 and P276.

Belongs to the aspartate/ornithine carbamoyltransferase superfamily. ATCase family. In terms of assembly, heterododecamer (2C3:3R2) of six catalytic PyrB chains organized as two trimers (C3), and six regulatory PyrI chains organized as three dimers (R2).

It catalyses the reaction carbamoyl phosphate + L-aspartate = N-carbamoyl-L-aspartate + phosphate + H(+). Its pathway is pyrimidine metabolism; UMP biosynthesis via de novo pathway; (S)-dihydroorotate from bicarbonate: step 2/3. In terms of biological role, catalyzes the condensation of carbamoyl phosphate and aspartate to form carbamoyl aspartate and inorganic phosphate, the committed step in the de novo pyrimidine nucleotide biosynthesis pathway. The sequence is that of Aspartate carbamoyltransferase catalytic subunit from Nitrosomonas europaea (strain ATCC 19718 / CIP 103999 / KCTC 2705 / NBRC 14298).